The sequence spans 227 residues: ATP-dependent dethiobiotin synthetase BioD (227 aa).

13–18 (DIGKTY) is an ATP binding site. Residue Thr17 coordinates Mg(2+). Lys38 is a catalytic residue. Residue Ser42 coordinates substrate. ATP contacts are provided by residues Asp55, 116-119 (EGSG), and 179-180 (NN). Asp55 and Glu116 together coordinate Mg(2+).

This sequence belongs to the dethiobiotin synthetase family. In terms of assembly, homodimer. It depends on Mg(2+) as a cofactor.

It localises to the cytoplasm. It catalyses the reaction (7R,8S)-7,8-diammoniononanoate + CO2 + ATP = (4R,5S)-dethiobiotin + ADP + phosphate + 3 H(+). It functions in the pathway cofactor biosynthesis; biotin biosynthesis; biotin from 7,8-diaminononanoate: step 1/2. Functionally, catalyzes a mechanistically unusual reaction, the ATP-dependent insertion of CO2 between the N7 and N8 nitrogen atoms of 7,8-diaminopelargonic acid (DAPA, also called 7,8-diammoniononanoate) to form a ureido ring. The polypeptide is ATP-dependent dethiobiotin synthetase BioD (Clostridium botulinum (strain Okra / Type B1)).